The primary structure comprises 320 residues: Cytochrome f (320 aa).

The N-terminal stretch at 1 to 35 (MQTRNTFSWIREEITRSISVSLMIYIITWASISGA) is a signal peptide. Residues tyrosine 36, cysteine 56, cysteine 59, and histidine 60 each contribute to the heme site. The chain crosses the membrane as a helical span at residues 286–306 (VQGLLFFLGSVVLAQIFLVLK).

It belongs to the cytochrome f family. As to quaternary structure, the 4 large subunits of the cytochrome b6-f complex are cytochrome b6, subunit IV (17 kDa polypeptide, petD), cytochrome f and the Rieske protein, while the 4 small subunits are PetG, PetL, PetM and PetN. The complex functions as a dimer. The cofactor is heme.

Its subcellular location is the plastid. The protein resides in the chloroplast thylakoid membrane. Component of the cytochrome b6-f complex, which mediates electron transfer between photosystem II (PSII) and photosystem I (PSI), cyclic electron flow around PSI, and state transitions. This is Cytochrome f from Capsella bursa-pastoris (Shepherd's purse).